Reading from the N-terminus, the 187-residue chain is Elongation factor P (187 aa).

This sequence belongs to the elongation factor P family.

It is found in the cytoplasm. The protein operates within protein biosynthesis; polypeptide chain elongation. Functionally, involved in peptide bond synthesis. Stimulates efficient translation and peptide-bond synthesis on native or reconstituted 70S ribosomes in vitro. Probably functions indirectly by altering the affinity of the ribosome for aminoacyl-tRNA, thus increasing their reactivity as acceptors for peptidyl transferase. The polypeptide is Elongation factor P (Roseobacter denitrificans (strain ATCC 33942 / OCh 114) (Erythrobacter sp. (strain OCh 114))).